The chain runs to 158 residues: NADPH-dependent 7-cyano-7-deazaguanine reductase (158 aa).

Cys56 serves as the catalytic Thioimide intermediate. The active-site Proton donor is the Asp63. Substrate is bound by residues 78-80 and 97-98; these read LES and HE.

The protein belongs to the GTP cyclohydrolase I family. QueF type 1 subfamily.

It localises to the cytoplasm. It carries out the reaction 7-aminomethyl-7-carbaguanine + 2 NADP(+) = 7-cyano-7-deazaguanine + 2 NADPH + 3 H(+). The protein operates within tRNA modification; tRNA-queuosine biosynthesis. Functionally, catalyzes the NADPH-dependent reduction of 7-cyano-7-deazaguanine (preQ0) to 7-aminomethyl-7-deazaguanine (preQ1). The sequence is that of NADPH-dependent 7-cyano-7-deazaguanine reductase from Nitrobacter hamburgensis (strain DSM 10229 / NCIMB 13809 / X14).